A 288-amino-acid chain; its full sequence is MNVTAKYELIGLMAYPIRHSLSPEMQNKALEKAGLPFTYMAFEVDNDSFPAAIEGLKALKMRGTGVSMPNKQLACEYVDELTPAAKLVGAINTIVNDDGYLRGYNTDGTGHIRAIKESGFDIKGKTMVLLGAGGASTAIGAQGAIEGLKEIKLFNRRDEFFDKALAFAQRVNENTDCVVTVTDLADQQAFAEALASADILTNGTKVGMKPLENESLVHDISLLHPGLLVTECVYNPHMTKLLQQAQQAGCKTIDGYGMLLWQGAEQFTLWTGKDFPLEYVKQVMGFGA.

Substrate contacts are provided by Lys-71 and Asp-107. NAD(+) is bound by residues 132–135 (AGGA), 155–158 (NRRD), Lys-205, 232–235 (CVYN), and Gly-255.

The protein belongs to the shikimate dehydrogenase family. As to quaternary structure, homodimer.

The catalysed reaction is L-quinate + NAD(+) = 3-dehydroquinate + NADH + H(+). The enzyme catalyses L-quinate + NADP(+) = 3-dehydroquinate + NADPH + H(+). It catalyses the reaction shikimate + NADP(+) = 3-dehydroshikimate + NADPH + H(+). It carries out the reaction shikimate + NAD(+) = 3-dehydroshikimate + NADH + H(+). The protein operates within metabolic intermediate biosynthesis; chorismate biosynthesis; chorismate from D-erythrose 4-phosphate and phosphoenolpyruvate: step 4/7. Functionally, the actual biological function of YdiB remains unclear, nor is it known whether 3-dehydroshikimate or quinate represents the natural substrate. Catalyzes the reversible NAD-dependent reduction of both 3-dehydroshikimate (DHSA) and 3-dehydroquinate to yield shikimate (SA) and quinate, respectively. It can use both NAD or NADP for catalysis, however it has higher catalytic efficiency with NAD. The protein is Quinate/shikimate dehydrogenase of Escherichia coli (strain SMS-3-5 / SECEC).